The primary structure comprises 231 residues: eRF1 methyltransferase catalytic subunit mtq2 (231 aa).

S-adenosyl-L-methionine-binding positions include 54–58 (GCGSG), aspartate 80, and asparagine 130. 130–133 (NPPY) serves as a coordination point for substrate.

This sequence belongs to the eukaryotic/archaeal PrmC-related family. As to quaternary structure, heterodimer of mtq2-trm112. mtq2 is the catalytic subunit carrying the catalytic and the S-adenosyl L-methionine binding sites.

The protein resides in the cytoplasm. It localises to the nucleus. It catalyses the reaction L-glutaminyl-[peptide chain release factor] + S-adenosyl-L-methionine = N(5)-methyl-L-glutaminyl-[peptide chain release factor] + S-adenosyl-L-homocysteine + H(+). In terms of biological role, methylates eRF1 on 'Gln-182' using S-adenosyl L-methionine as methyl donor. eRF1 needs to be complexed to eRF3 in its GTP-bound form to be efficiently methylated. The chain is eRF1 methyltransferase catalytic subunit mtq2 (mtq2) from Schizosaccharomyces pombe (strain 972 / ATCC 24843) (Fission yeast).